The sequence spans 158 residues: Small ribosomal subunit protein uS7c (158 aa).

This sequence belongs to the universal ribosomal protein uS7 family. In terms of assembly, part of the 30S ribosomal subunit.

Its subcellular location is the plastid. It is found in the chloroplast. Its function is as follows. One of the primary rRNA binding proteins, it binds directly to 16S rRNA where it nucleates assembly of the head domain of the 30S subunit. This is Small ribosomal subunit protein uS7c (rps7) from Trieres chinensis (Marine centric diatom).